The primary structure comprises 348 residues: GTPase Obg (348 aa).

One can recognise an Obg domain in the interval 1-159; the sequence is MKFLDLAKVY…RTIWLRLKLI (159 aa). An OBG-type G domain is found at 160–327; that stretch reads ADAGLLGLPN…VLRAVRAEID (168 aa). Residues 166–173, 191–195, 212–215, 279–282, and 308–310 each bind GTP; these read GLPNAGKS, FTTLH, DIPG, NKID, and SSV. Mg(2+)-binding residues include serine 173 and threonine 193.

This sequence belongs to the TRAFAC class OBG-HflX-like GTPase superfamily. OBG GTPase family. Monomer. Mg(2+) is required as a cofactor.

The protein resides in the cytoplasm. An essential GTPase which binds GTP, GDP and possibly (p)ppGpp with moderate affinity, with high nucleotide exchange rates and a fairly low GTP hydrolysis rate. Plays a role in control of the cell cycle, stress response, ribosome biogenesis and in those bacteria that undergo differentiation, in morphogenesis control. The protein is GTPase Obg of Ruegeria sp. (strain TM1040) (Silicibacter sp.).